The primary structure comprises 393 residues: Lipid-A-disaccharide synthase (393 aa).

It belongs to the LpxB family.

The catalysed reaction is a lipid X + a UDP-2-N,3-O-bis[(3R)-3-hydroxyacyl]-alpha-D-glucosamine = a lipid A disaccharide + UDP + H(+). The protein operates within bacterial outer membrane biogenesis; LPS lipid A biosynthesis. Its function is as follows. Condensation of UDP-2,3-diacylglucosamine and 2,3-diacylglucosamine-1-phosphate to form lipid A disaccharide, a precursor of lipid A, a phosphorylated glycolipid that anchors the lipopolysaccharide to the outer membrane of the cell. The protein is Lipid-A-disaccharide synthase of Bordetella pertussis (strain Tohama I / ATCC BAA-589 / NCTC 13251).